Here is a 361-residue protein sequence, read N- to C-terminus: sn-glycerol-3-phosphate import ATP-binding protein UgpC (361 aa).

The region spanning 4 to 235 is the ABC transporter domain; it reads LSFRNLKKTY…PASTFVAGFI (232 aa). 37–44 serves as a coordination point for ATP; sequence GPSGCGKS.

This sequence belongs to the ABC transporter superfamily. sn-glycerol-3-phosphate importer (TC 3.A.1.1.3) family. The complex is composed of two ATP-binding proteins (UgpC), two transmembrane proteins (UgpA and UgpE) and a solute-binding protein (UgpB).

The protein localises to the cell inner membrane. The catalysed reaction is sn-glycerol 3-phosphate(out) + ATP + H2O = sn-glycerol 3-phosphate(in) + ADP + phosphate + H(+). Part of the ABC transporter complex UgpBAEC involved in sn-glycerol-3-phosphate (G3P) import. Responsible for energy coupling to the transport system. This is sn-glycerol-3-phosphate import ATP-binding protein UgpC from Bordetella avium (strain 197N).